A 271-amino-acid chain; its full sequence is Probable CAAX prenyl protease 2 (271 aa).

2 consecutive transmembrane segments (helical) span residues 3–23 and 42–62; these read VYLISFFFTAIYVVSLYTFPV and CISVLLASSVCCILTRLIIGP. Residues Glu-126 and His-160 each act as proton donor/acceptor in the active site. Helical transmembrane passes span 174–194 and 236–256; these read AYIAAALQTVVQFSYTTVFGW and IYYTLLLLGVLIFYMTWGITD.

This sequence belongs to the peptidase U48 family.

Its subcellular location is the endoplasmic reticulum membrane. It catalyses the reaction Hydrolyzes the peptide bond -P2-(S-farnesyl or geranylgeranyl)C-P1'-P2'-P3'-COOH where P1' and P2' are amino acids with aliphatic sidechains and P3' is any C-terminal residue.. Functionally, protease involved in the processing of a variety of prenylated proteins containing the C-terminal CAAX motif, where C is a cysteine modified with an isoprenoid lipid, A is an aliphatic amino acid and X is any C-terminal amino acid. Proteolytically removes the C-terminal three residues of farnesylated proteins, leaving the prenylated cysteine as the new C-terminus. In Schizosaccharomyces pombe (strain 972 / ATCC 24843) (Fission yeast), this protein is Probable CAAX prenyl protease 2.